Here is a 351-residue protein sequence, read N- to C-terminus: Holliday junction branch migration complex subunit RuvB (351 aa).

A large ATPase domain (RuvB-L) region spans residues 1–182; it reads MNDRLITPDA…FGIVQRLEYY (182 aa). ATP is bound by residues isoleucine 21, arginine 22, glycine 63, lysine 66, threonine 67, threonine 68, 129 to 131, arginine 172, tyrosine 182, and arginine 219; that span reads EDF. Residue threonine 67 participates in Mg(2+) binding. Positions 183–253 are small ATPAse domain (RuvB-S); the sequence is NVADLSGIVK…VAHAAMELLN (71 aa). The segment at 256–351 is head domain (RuvB-H); it reads RNGFDEQDRR…QDAPPVGRER (96 aa). Positions 292, 311, and 316 each coordinate DNA. Positions 328–351 are disordered; the sequence is LNPPRQPDTSPDLFQDAPPVGRER.

Belongs to the RuvB family. Homohexamer. Forms an RuvA(8)-RuvB(12)-Holliday junction (HJ) complex. HJ DNA is sandwiched between 2 RuvA tetramers; dsDNA enters through RuvA and exits via RuvB. An RuvB hexamer assembles on each DNA strand where it exits the tetramer. Each RuvB hexamer is contacted by two RuvA subunits (via domain III) on 2 adjacent RuvB subunits; this complex drives branch migration. In the full resolvosome a probable DNA-RuvA(4)-RuvB(12)-RuvC(2) complex forms which resolves the HJ.

The protein localises to the cytoplasm. The enzyme catalyses ATP + H2O = ADP + phosphate + H(+). In terms of biological role, the RuvA-RuvB-RuvC complex processes Holliday junction (HJ) DNA during genetic recombination and DNA repair, while the RuvA-RuvB complex plays an important role in the rescue of blocked DNA replication forks via replication fork reversal (RFR). RuvA specifically binds to HJ cruciform DNA, conferring on it an open structure. The RuvB hexamer acts as an ATP-dependent pump, pulling dsDNA into and through the RuvAB complex. RuvB forms 2 homohexamers on either side of HJ DNA bound by 1 or 2 RuvA tetramers; 4 subunits per hexamer contact DNA at a time. Coordinated motions by a converter formed by DNA-disengaged RuvB subunits stimulates ATP hydrolysis and nucleotide exchange. Immobilization of the converter enables RuvB to convert the ATP-contained energy into a lever motion, pulling 2 nucleotides of DNA out of the RuvA tetramer per ATP hydrolyzed, thus driving DNA branch migration. The RuvB motors rotate together with the DNA substrate, which together with the progressing nucleotide cycle form the mechanistic basis for DNA recombination by continuous HJ branch migration. Branch migration allows RuvC to scan DNA until it finds its consensus sequence, where it cleaves and resolves cruciform DNA. The polypeptide is Holliday junction branch migration complex subunit RuvB (Alkalilimnicola ehrlichii (strain ATCC BAA-1101 / DSM 17681 / MLHE-1)).